Reading from the N-terminus, the 1273-residue chain is Chitin synthase 7 (1273 aa).

The segment at 1-69 (MPAVERNAPF…LINPSSGGPG (69 aa)) is disordered. The Cytoplasmic portion of the chain corresponds to 1 to 79 (MPAVERNAPF…FSAASRSKHR (79 aa)). A helical membrane pass occupies residues 80-100 (FSWWTAFSLFVTFWAPSPLLS). Residues 101-117 (SCCGLKDKQSRQAWREK) lie on the Extracellular side of the membrane. A helical transmembrane segment spans residues 118 to 138 (VSLVFIAILLGGFIGFITMGL). Residues 139–360 (NAALCPSASS…FISNLVLYCS (222 aa)) lie on the Cytoplasmic side of the membrane. A helical membrane pass occupies residues 361–381 (LVVILAIVLIRFFMAVWFAWF). Residues 382–820 (MAGRMSSPPR…LCGTFCFSMQ (439 aa)) are Extracellular-facing. Asparagine 412 carries an N-linked (GlcNAc...) asparagine glycan. The interval 416 to 451 (AAPWANKQRPPPSQPARRRRDSAQSATPSVPDSLSV) is disordered. 2 N-linked (GlcNAc...) asparagine glycosylation sites follow: asparagine 667 and asparagine 796. The helical transmembrane segment at 821 to 841 (FVVFMDLLGTAVLPISIALTY) threads the bilayer. The Cytoplasmic portion of the chain corresponds to 842-857 (TLVVTYCLNPPHSFTE). Residues 858-878 (AIPLMLLVAVIGMPALLILLA) form a helical membrane-spanning segment. Over 879–881 (TRK) the chain is Extracellular. Residues 882 to 902 (VVYVLWMLIYLLALPVWNFVL) form a helical membrane-spanning segment. At 903 to 1273 (PVYSFWHFDD…RGRSYHDRFS (371 aa)) the chain is on the cytoplasmic side. Disordered regions lie at residues 966–1009 (RELE…SVTV) and 1126–1273 (NGGG…DRFS). Over residues 1000-1009 (SDSFSDSVTV) the composition is skewed to low complexity. Over residues 1215–1232 (QHPPQPSQPPQPPQPAQP) the composition is skewed to pro residues. The segment covering 1233 to 1246 (TRPGGAPAAPPRGA) has biased composition (low complexity).

This sequence belongs to the chitin synthase family. Class IV subfamily.

Its subcellular location is the cell membrane. It is found in the cytoplasmic vesicle membrane. It catalyses the reaction [(1-&gt;4)-N-acetyl-beta-D-glucosaminyl](n) + UDP-N-acetyl-alpha-D-glucosamine = [(1-&gt;4)-N-acetyl-beta-D-glucosaminyl](n+1) + UDP + H(+). Polymerizes chitin, a structural polymer of the cell wall and septum, by transferring the sugar moiety of UDP-GlcNAc to the non-reducing end of the growing chitin polymer. The chain is Chitin synthase 7 from Mycosarcoma maydis (Corn smut fungus).